The following is a 273-amino-acid chain: NAD(P)H-hydrate epimerase (273 aa).

Residues 18-257 enclose the YjeF N-terminal domain; it reads ALKLDEDLIN…LLAMEYDVQE (240 aa). A (6S)-NADPHX-binding site is contributed by 71–75; it reads NNGGD. K(+) contacts are provided by Asn-72 and Asp-146. (6S)-NADPHX contacts are provided by residues 150-157, Tyr-162, and Asp-188; that span reads GFSFHGGP. Residue Ser-191 participates in K(+) binding.

It belongs to the NnrE/AIBP family. Requires K(+) as cofactor.

It carries out the reaction (6R)-NADHX = (6S)-NADHX. The catalysed reaction is (6R)-NADPHX = (6S)-NADPHX. Its function is as follows. Catalyzes the epimerization of the S- and R-forms of NAD(P)HX, a damaged form of NAD(P)H that is a result of enzymatic or heat-dependent hydration. This is a prerequisite for the S-specific NAD(P)H-hydrate dehydratase to allow the repair of both epimers of NAD(P)HX. The chain is NAD(P)H-hydrate epimerase from Giardia intestinalis (strain ATCC 50803 / WB clone C6) (Giardia lamblia).